A 310-amino-acid polypeptide reads, in one-letter code: Protein BIG GRAIN 1 (310 aa).

The tract at residues 81-141 is disordered; the sequence is RAPGPHATTS…KKAKKPGASI (61 aa). The segment covering 90–106 has biased composition (low complexity); the sequence is SSSSECSSYGGFSSSEA.

Belongs to the BIG GRAIN 1 (BG1) plant protein family.

Its subcellular location is the cell membrane. Involved in auxin transport. Positive regulator of the auxin signaling pathway involved in gravitropism, plant growth and grain development. This is Protein BIG GRAIN 1 from Oryza sativa subsp. indica (Rice).